Reading from the N-terminus, the 938-residue chain is Glutamate receptor ionotropic, NMDA 1 (938 aa).

A signal peptide spans 1 to 18 (MSTMHLLTFALLFSCSFA). Residues 19 to 559 (RAACDPKIVN…TLDSFMQPFQ (541 aa)) lie on the Extracellular side of the membrane. Asn61, Asn203, Asn239, Asn276, Asn300, Asn350, Asn368, Asn440, Asn471, and Asn491 each carry an N-linked (GlcNAc...) asparagine glycan. Cysteines 79 and 308 form a disulfide. 2 cysteine pairs are disulfide-bonded: Cys420/Cys454 and Cys436/Cys455. Positions 516, 518, and 523 each coordinate glycine. A helical transmembrane segment spans residues 560–580 (STLWLLVGLSVHVVAVMLYLL). At 581–602 (DRFSPFGRFKVNSEEEEEDALT) the chain is on the cytoplasmic side. The discontinuously helical intramembrane region spans 603-624 (LSSAMWFSWGVLLNSGIGEGAP). Residues 603–624 (LSSAMWFSWGVLLNSGIGEGAP) are pore-forming. Residues 625–630 (RSFSAR) are Cytoplasmic-facing. The chain crosses the membrane as a helical span at residues 631–647 (ILGMVWAGFAMIIVASY). Residues 648–812 (TANLAAFLVL…NAPATLTFEN (165 aa)) are Extracellular-facing. Asn674 carries N-linked (GlcNAc...) asparagine glycosylation. Residues Ser688 and Asp732 each contribute to the glycine site. The cysteines at positions 744 and 798 are disulfide-linked. Asn771 is a glycosylation site (N-linked (GlcNAc...) asparagine). The helical transmembrane segment at 813 to 833 (MAGVFMLVAGGIVAGIFLIFI) threads the bilayer. Residues 834–938 (EIAYKRHKDA…LQLCSRHRES (105 aa)) lie on the Cytoplasmic side of the membrane. At Lys877 the chain carries Phosphoserine. Phosphoserine; by PKC is present on residues Ser889, Ser890, Ser896, and Ser897. The tract at residues 889–938 (SSFKRRRSSKDTSTGGGRGALQNQKDTVLPRRAIEREEGQLQLCSRHRES) is disordered. At Lys898 the chain carries Phosphoserine. Residues 916-927 (VLPRRAIEREEG) are compositionally biased toward basic and acidic residues.

It belongs to the glutamate-gated ion channel (TC 1.A.10.1) family. NR1/GRIN1 subfamily. In terms of assembly, heterotetramer; the NMDAR subunits are modular and harbor tiered domains that function in concert to regulate opening and closing of the cation-selective ion channel pore. Forms heterotetrameric channels composed of two GluN1/zeta subunits (GRIN1), and two identical GluN2/epsilon subunits (GRIN2A, GRIN2B, GRIN2C or GRIN2D) or GluN3 subunits (GRIN3A or GRIN3B) (in vitro). Can also form heterotetrameric channels that contain at least two GluN1 subunits and at least two different GluN2 subunits (or a combination of one GluN2 and one GluN3 subunits) (in vitro). In vivo, the subunit composition may vary in function of the expression levels of the different subunits. Found in a complex with GRIN2A or GRIN2B, GRIN3A and PPP2CB. Found in a complex with GRIN2A or GRIN2B and GRIN3B;. Interacts with SNX27 (via PDZ domain); the interaction is required for recycling to the plasma membrane when endocytosed and prevent degradation in lysosomes. Interacts with DLG4 and MPDZ. Interacts with LRFN1 and LRFN2. Interacts with MYZAP. Found in a complex with DLG4 and PRR7. Found in a complex with GRIN2B and PRR7. Interacts with PRR7; the interaction is reduced following NMDA receptor activity. Post-translationally, NMDA is probably regulated by C-terminal phosphorylation of an isoform of NR1 by PKC. Dephosphorylated on Ser-897 probably by protein phosphatase 2A (PPP2CB). Its phosphorylated state is influenced by the formation of the NMDAR-PPP2CB complex and the NMDAR channel activity. In terms of tissue distribution, detected throughout the brain, in brain cortex, cerebellum, thalamus and olfactory bulb.

It localises to the cell membrane. It is found in the postsynaptic cell membrane. Its subcellular location is the synaptic cell membrane. The protein localises to the postsynaptic density membrane. The catalysed reaction is Ca(2+)(in) = Ca(2+)(out). It catalyses the reaction Na(+)(in) = Na(+)(out). It carries out the reaction K(+)(in) = K(+)(out). With respect to regulation, NMDA glutamate receptor activity is potentiated by Zn2(+) in a dose-dependent fashion. The potentiating effect of Zn2(+) is at submicromolar concentrations and its inhibitory action is at high micromolar to millimolar concentrations. Excitatory glycine receptors are inhibited by D-serine at 100uM. Component of N-methyl-D-aspartate (NMDA) receptors (NMDARs) that function as heterotetrameric, ligand-gated cation channels with high calcium permeability and voltage-dependent block by Mg(2+). NMDARs participate in synaptic plasticity for learning and memory formation by contributing to the long-term potentiation (LTP). Channel activation requires binding of the neurotransmitter L-glutamate to the GluN2 subunit, glycine or D-serine binding to the GluN1 subunit, plus membrane depolarization to eliminate channel inhibition by Mg(2+). NMDARs mediate simultaneously the potasium efflux and the influx of calcium and sodium. Each GluN2 or GluN3 subunit confers differential attributes to channel properties, including activation, deactivation and desensitization kinetics, pH sensitivity, Ca2(+) permeability, and binding to allosteric modulators. Forms excitatory glycinergic receptor complexes with GluN3 alone which are activated by glycine binding to the GluN1 and GluN3 subunits. The protein is Glutamate receptor ionotropic, NMDA 1 of Rattus norvegicus (Rat).